Here is a 345-residue protein sequence, read N- to C-terminus: Fe-S cluster assembly protein DRE2 (345 aa).

The interval 29-163 (GDSGDRTLLL…KPDYAEQEVV (135 aa)) is N-terminal SAM-like domain. The interval 164–237 (PLRFGAKKVN…EDTLLTEADL (74 aa)) is linker. [2Fe-2S] cluster contacts are provided by Cys247, Cys258, Cys261, and Cys263. Residues 247–263 (CAPQPGKKRRACKDCTC) are fe-S binding site A. [4Fe-4S] cluster-binding residues include Cys308, Cys311, Cys319, and Cys322. 2 consecutive short sequence motifs (cx2C motif) follow at residues 308–311 (CNSC) and 319–322 (CADC). The fe-S binding site B stretch occupies residues 308-322 (CNSCYLGDAFRCADC).

It belongs to the anamorsin family. In terms of assembly, monomer. Interacts with TAH18. Interacts with MIA40. Requires [2Fe-2S] cluster as cofactor. [4Fe-4S] cluster serves as cofactor.

It localises to the cytoplasm. It is found in the mitochondrion intermembrane space. In terms of biological role, component of the cytosolic iron-sulfur (Fe-S) protein assembly (CIA) machinery required for the maturation of extramitochondrial Fe-S proteins. Part of an electron transfer chain functioning in an early step of cytosolic Fe-S biogenesis, facilitating the de novo assembly of a [4Fe-4S] cluster on the scaffold complex CFD1-NBP35. Electrons are transferred to DRE2 from NADPH via the FAD- and FMN-containing protein TAH18. TAH18-DRE2 are also required for the assembly of the diferric tyrosyl radical cofactor of ribonucleotide reductase (RNR), probably by providing electrons for reduction during radical cofactor maturation in the catalytic small subunit RNR2. This is Fe-S cluster assembly protein DRE2 from Podospora anserina (strain S / ATCC MYA-4624 / DSM 980 / FGSC 10383) (Pleurage anserina).